We begin with the raw amino-acid sequence, 458 residues long: tRNA-2-methylthio-N(6)-dimethylallyladenosine synthase (458 aa).

In terms of domain architecture, MTTase N-terminal spans 3–120 (QKLYIETFGC…LPSMLEQVRC (118 aa)). [4Fe-4S] cluster-binding residues include cysteine 12, cysteine 49, cysteine 83, cysteine 157, cysteine 161, and cysteine 164. In terms of domain architecture, Radical SAM core spans 143 to 375 (RADGPKAFVS…QAKIADNAAK (233 aa)). In terms of domain architecture, TRAM spans 378–441 (ASMVGSIQSV…PNSLRGRLIG (64 aa)).

It belongs to the methylthiotransferase family. MiaB subfamily. In terms of assembly, monomer. The cofactor is [4Fe-4S] cluster.

It is found in the cytoplasm. It catalyses the reaction N(6)-dimethylallyladenosine(37) in tRNA + (sulfur carrier)-SH + AH2 + 2 S-adenosyl-L-methionine = 2-methylsulfanyl-N(6)-dimethylallyladenosine(37) in tRNA + (sulfur carrier)-H + 5'-deoxyadenosine + L-methionine + A + S-adenosyl-L-homocysteine + 2 H(+). Its function is as follows. Catalyzes the methylthiolation of N6-(dimethylallyl)adenosine (i(6)A), leading to the formation of 2-methylthio-N6-(dimethylallyl)adenosine (ms(2)i(6)A) at position 37 in tRNAs that read codons beginning with uridine. This chain is tRNA-2-methylthio-N(6)-dimethylallyladenosine synthase, found in Methylococcus capsulatus (strain ATCC 33009 / NCIMB 11132 / Bath).